Reading from the N-terminus, the 196-residue chain is GTP cyclohydrolase 1 (196 aa).

3 residues coordinate Zn(2+): C86, H89, and C158.

Belongs to the GTP cyclohydrolase I family. In terms of assembly, toroid-shaped homodecamer, composed of two pentamers of five dimers.

It carries out the reaction GTP + H2O = 7,8-dihydroneopterin 3'-triphosphate + formate + H(+). The protein operates within cofactor biosynthesis; 7,8-dihydroneopterin triphosphate biosynthesis; 7,8-dihydroneopterin triphosphate from GTP: step 1/1. The chain is GTP cyclohydrolase 1 from Clostridium botulinum (strain ATCC 19397 / Type A).